Consider the following 114-residue polypeptide: Large ribosomal subunit protein bL20 (114 aa).

This sequence belongs to the bacterial ribosomal protein bL20 family.

Functionally, binds directly to 23S ribosomal RNA and is necessary for the in vitro assembly process of the 50S ribosomal subunit. It is not involved in the protein synthesizing functions of that subunit. The polypeptide is Large ribosomal subunit protein bL20 (Anaeromyxobacter dehalogenans (strain 2CP-1 / ATCC BAA-258)).